Reading from the N-terminus, the 57-residue chain is UPF0391 membrane protein bsl5717 (57 aa).

2 helical membrane-spanning segments follow: residues 6 to 26 and 35 to 55; these read WALI…TGIS and FLFY…LTIF.

This sequence belongs to the UPF0391 family.

Its subcellular location is the cell membrane. This Bradyrhizobium diazoefficiens (strain JCM 10833 / BCRC 13528 / IAM 13628 / NBRC 14792 / USDA 110) protein is UPF0391 membrane protein bsl5717.